Consider the following 337-residue polypeptide: MVMLDHPLAVTMGDPSGIGPEIIAKMYLRRPDKRNWIVVGDPLVMEHAIANLGVAVQIRRIATVEEAGCEDGVLNVLASSSLATLPAVGRVSAVSGQAAYDAIVTAIGLARQGTIRGIVTAPIHKEALAAAGIHYPGHTEILAEQGGAQHVAMMLANDEIRTVLVTIHCSLADAIRKADFPAQMQAIRLAHEGARALGIVQPRIAVAGLNPHAGEGGLFGDEEIRIITPAIAAARAEGIDATGPWPGDTVFMQARLGKFDVVVAQYHDQGLIPVKFMGLEKGVNITLGLPFVRTSPDHGTAFDIAGRGIADSSSLETAFDYATRLKVPTPFFSGAMS.

Substrate is bound by residues His138 and Thr139. A divalent metal cation contacts are provided by His168, His212, and His267. Positions 275, 284, and 293 each coordinate substrate.

The protein belongs to the PdxA family. In terms of assembly, homodimer. Requires Zn(2+) as cofactor. It depends on Mg(2+) as a cofactor. The cofactor is Co(2+).

It localises to the cytoplasm. The catalysed reaction is 4-(phosphooxy)-L-threonine + NAD(+) = 3-amino-2-oxopropyl phosphate + CO2 + NADH. The protein operates within cofactor biosynthesis; pyridoxine 5'-phosphate biosynthesis; pyridoxine 5'-phosphate from D-erythrose 4-phosphate: step 4/5. Its function is as follows. Catalyzes the NAD(P)-dependent oxidation of 4-(phosphooxy)-L-threonine (HTP) into 2-amino-3-oxo-4-(phosphooxy)butyric acid which spontaneously decarboxylates to form 3-amino-2-oxopropyl phosphate (AHAP). The polypeptide is 4-hydroxythreonine-4-phosphate dehydrogenase (Beijerinckia indica subsp. indica (strain ATCC 9039 / DSM 1715 / NCIMB 8712)).